The following is a 163-amino-acid chain: 3-isopropylmalate dehydratase small subunit (163 aa).

The protein belongs to the LeuD family. LeuD type 2 subfamily. As to quaternary structure, heterodimer of LeuC and LeuD.

It catalyses the reaction (2R,3S)-3-isopropylmalate = (2S)-2-isopropylmalate. Its pathway is amino-acid biosynthesis; L-leucine biosynthesis; L-leucine from 3-methyl-2-oxobutanoate: step 2/4. In terms of biological role, catalyzes the isomerization between 2-isopropylmalate and 3-isopropylmalate, via the formation of 2-isopropylmaleate. This is 3-isopropylmalate dehydratase small subunit from Clostridioides difficile (strain 630) (Peptoclostridium difficile).